A 571-amino-acid polypeptide reads, in one-letter code: Adenine deaminase (571 aa).

This sequence belongs to the metallo-dependent hydrolases superfamily. Adenine deaminase family. The cofactor is Mn(2+).

It carries out the reaction adenine + H2O + H(+) = hypoxanthine + NH4(+). This is Adenine deaminase from Dehalococcoides mccartyi (strain ATCC BAA-2266 / KCTC 15142 / 195) (Dehalococcoides ethenogenes (strain 195)).